Reading from the N-terminus, the 466-residue chain is Exodeoxyribonuclease 7 large subunit (466 aa).

It belongs to the XseA family. As to quaternary structure, heterooligomer composed of large and small subunits.

The protein localises to the cytoplasm. The catalysed reaction is Exonucleolytic cleavage in either 5'- to 3'- or 3'- to 5'-direction to yield nucleoside 5'-phosphates.. Bidirectionally degrades single-stranded DNA into large acid-insoluble oligonucleotides, which are then degraded further into small acid-soluble oligonucleotides. The protein is Exodeoxyribonuclease 7 large subunit of Vesicomyosocius okutanii subsp. Calyptogena okutanii (strain HA).